Consider the following 472-residue polypeptide: Eukaryotic translation initiation factor 2 subunit 3 (472 aa).

Ala2 is subject to N-acetylalanine; partial. Ser16 carries the phosphoserine modification. The tr-type G domain occupies 39–248 (QATINIGTIG…IVKKIPVPPR (210 aa)). The segment at 48–55 (GHVAHGKS) is G1. Residue 51 to 56 (AHGKST) participates in GTP binding. Positions 76–80 (NITIK) are G2. The interval 134 to 137 (DCPG) is G3. Residues 190–193 (NKID) and 225–227 (SAQ) contribute to the GTP site. The G4 stretch occupies residues 190-193 (NKID). The tract at residues 225–227 (SAQ) is G5. Residues 457–469 (GQIRRGVTIKPTV) form an interacts with CDC123 region.

It belongs to the TRAFAC class translation factor GTPase superfamily. Classic translation factor GTPase family. EIF2G subfamily. In terms of assembly, eukaryotic translation initiation factor 2 eIF2 is a heterotrimeric complex composed of an alpha (EIF2S1), a beta (EIF2S2) and a gamma (EIF2S3) chain. eIF2 is member of the 43S pre-initiation complex (43S PIC). Interacts (via C-terminus) with CDC123; the interaction is direct. As to expression, expressed in testis, brain, liver and muscle.

The protein resides in the cytoplasm. It localises to the cytosol. The catalysed reaction is GTP + H2O = GDP + phosphate + H(+). Its function is as follows. Member of the eIF2 complex that functions in the early steps of protein synthesis by forming a ternary complex with GTP and initiator tRNA. This complex binds to a 40S ribosomal subunit, followed by mRNA binding to form the 43S pre-initiation complex (43S PIC). Junction of the 60S ribosomal subunit to form the 80S initiation complex is preceded by hydrolysis of the GTP bound to eIF2 and release of an eIF2-GDP binary complex. In order for eIF2 to recycle and catalyze another round of initiation, the GDP bound to eIF2 must exchange with GTP by way of a reaction catalyzed by eIF-2B. The protein is Eukaryotic translation initiation factor 2 subunit 3 (EIF2S3) of Homo sapiens (Human).